Consider the following 629-residue polypeptide: Translation initiation factor IF-2 (629 aa).

Residues 1–20 are disordered; it reads MAKNIKTNKKPQQVNKKEMS. The tr-type G domain maps to 127 to 297; that stretch reads HRAPIVTIMG…LLIAEMQDYK (171 aa). The interval 136–143 is G1; sequence GHVDHGKT. A GTP-binding site is contributed by 136–143; that stretch reads GHVDHGKT. Positions 161–165 are G2; sequence GITQA. The G3 stretch occupies residues 183–186; that stretch reads DTPG. GTP-binding positions include 183–187 and 237–240; these read DTPGH and NKCD. The tract at residues 237-240 is G4; the sequence is NKCD. Residues 273-275 form a G5 region; the sequence is SAK.

This sequence belongs to the TRAFAC class translation factor GTPase superfamily. Classic translation factor GTPase family. IF-2 subfamily.

The protein localises to the cytoplasm. Its function is as follows. One of the essential components for the initiation of protein synthesis. Protects formylmethionyl-tRNA from spontaneous hydrolysis and promotes its binding to the 30S ribosomal subunits. Also involved in the hydrolysis of GTP during the formation of the 70S ribosomal complex. This Mesoplasma florum (strain ATCC 33453 / NBRC 100688 / NCTC 11704 / L1) (Acholeplasma florum) protein is Translation initiation factor IF-2.